We begin with the raw amino-acid sequence, 602 residues long: Protein nessun dorma (602 aa).

A coiled-coil region spans residues 188–208 (AEAKYIQQRLDYLELDLSDAE).

In terms of assembly, interacts (via N-terminus) with both members of the centralspindlin complex, Pav and Tum. As to expression, detected in testis (at protein level). Also expressed in ovary.

The protein resides in the midbody. Required during male meiosis for completion of spermatocyte cytokinesis and possibly also required in female germline cells. Also involved in ring canal formation in male and female germline cells. Not essential for cleavage furrow ingression but is required for contractile ring stability and the attachment of the furrowing membrane to the actomyosin ring in late telophase. Displays high binding affinity for beta-galactosides. This Drosophila melanogaster (Fruit fly) protein is Protein nessun dorma.